Reading from the N-terminus, the 146-residue chain is Large ribosomal subunit protein uL15 (146 aa).

The interval 1-54 (MKLHELQPAAGSRKAPKRVGRGTGSGLGRNAGKGEKGQNARSGGGVRPGFEGGQ) is disordered. Composition is skewed to gly residues over residues 21–31 (RGTGSGLGRNA) and 42–52 (SGGGVRPGFEG).

The protein belongs to the universal ribosomal protein uL15 family. In terms of assembly, part of the 50S ribosomal subunit.

In terms of biological role, binds to the 23S rRNA. This is Large ribosomal subunit protein uL15 from Clostridium botulinum (strain Eklund 17B / Type B).